The chain runs to 93 residues: Pyrimidine/purine nucleoside phosphorylase (93 aa).

Belongs to the nucleoside phosphorylase PpnP family.

It carries out the reaction a purine D-ribonucleoside + phosphate = a purine nucleobase + alpha-D-ribose 1-phosphate. The catalysed reaction is adenosine + phosphate = alpha-D-ribose 1-phosphate + adenine. The enzyme catalyses cytidine + phosphate = cytosine + alpha-D-ribose 1-phosphate. It catalyses the reaction guanosine + phosphate = alpha-D-ribose 1-phosphate + guanine. It carries out the reaction inosine + phosphate = alpha-D-ribose 1-phosphate + hypoxanthine. The catalysed reaction is thymidine + phosphate = 2-deoxy-alpha-D-ribose 1-phosphate + thymine. The enzyme catalyses uridine + phosphate = alpha-D-ribose 1-phosphate + uracil. It catalyses the reaction xanthosine + phosphate = alpha-D-ribose 1-phosphate + xanthine. In terms of biological role, catalyzes the phosphorolysis of diverse nucleosides, yielding D-ribose 1-phosphate and the respective free bases. Can use uridine, adenosine, guanosine, cytidine, thymidine, inosine and xanthosine as substrates. Also catalyzes the reverse reactions. The protein is Pyrimidine/purine nucleoside phosphorylase of Vibrio vulnificus (strain CMCP6).